Reading from the N-terminus, the 320-residue chain is Olfactory receptor 13C8 (320 aa).

The Extracellular portion of the chain corresponds to 1–25 (MERTNDSTSTEFFLVGLSAHPKLQT). Asparagine 5 carries N-linked (GlcNAc...) asparagine glycosylation. The chain crosses the membrane as a helical span at residues 26–46 (VFFVLILWMYLMILLGNGVLI). Over 47–54 (SVIIFDSH) the chain is Cytoplasmic. The chain crosses the membrane as a helical span at residues 55-75 (LHTPMYFFLCNLSFLDVCYTS). At 76 to 99 (SSVPLILASFLAVKKKVSFSGCMV) the chain is on the extracellular side. Cysteines 97 and 189 form a disulfide. The chain crosses the membrane as a helical span at residues 100 to 120 (QMFISFAMGATECMILGTMAL). Over 121–139 (DRYVAICYPLRYPVIMSKG) the chain is Cytoplasmic. Residues 140-160 (AYVAMAAGSWVTGLVDSVVQT) traverse the membrane as a helical segment. At 161 to 197 (AFAMQLPFCANNVIKHFVCEILAILKLACADISINVI) the chain is on the extracellular side. The helical transmembrane segment at 198–217 (SMTGSNLIVLVIPLLVISIS) threads the bilayer. Residues 218–237 (YIFIVATILRIPSTEGKHKA) lie on the Cytoplasmic side of the membrane. Residues 238-258 (FSTCSAHLTVVIIFYGTIFFM) traverse the membrane as a helical segment. Residues 259-277 (YAKPESKASVDSGNEDIIE) are Extracellular-facing. A helical transmembrane segment spans residues 278-298 (ALISLFYGVMTPMLNPLIYSL). At 299 to 320 (RNKDVKAAVKNILCRKNFSDGK) the chain is on the cytoplasmic side.

It belongs to the G-protein coupled receptor 1 family.

Its subcellular location is the cell membrane. Functionally, odorant receptor. The sequence is that of Olfactory receptor 13C8 (OR13C8) from Homo sapiens (Human).